A 299-amino-acid polypeptide reads, in one-letter code: Homoserine O-acetyltransferase (299 aa).

The active-site Acyl-thioester intermediate is Cys-142. Substrate-binding residues include Lys-163 and Ser-192. His-235 (proton acceptor) is an active-site residue. Residue Glu-237 is part of the active site. Arg-249 serves as a coordination point for substrate.

This sequence belongs to the MetA family.

The protein resides in the cytoplasm. The catalysed reaction is L-homoserine + acetyl-CoA = O-acetyl-L-homoserine + CoA. The protein operates within amino-acid biosynthesis; L-methionine biosynthesis via de novo pathway; O-acetyl-L-homoserine from L-homoserine: step 1/1. Transfers an acetyl group from acetyl-CoA to L-homoserine, forming acetyl-L-homoserine. The sequence is that of Homoserine O-acetyltransferase from Synechococcus elongatus (strain ATCC 33912 / PCC 7942 / FACHB-805) (Anacystis nidulans R2).